We begin with the raw amino-acid sequence, 246 residues long: Homeobox protein SIX6 (246 aa).

The homeobox DNA-binding region spans 128–187; sequence GEQKTHCFKERTRHLLREWYLQDPYPNPSKKRELAQATGLTPTQVGNWFKNRRQRDRAAA. Residues 190-246 form a disordered region; it reads NRLQQQVLSQGSGRALRAEGDGTPEVLGVATSPAASLSSKAATSAISITSSDSECDI. A compositionally biased stretch (polar residues) spans 191–201; that stretch reads RLQQQVLSQGS. Thr-212 is subject to Phosphothreonine. The segment covering 219–246 has biased composition (low complexity); sequence ATSPAASLSSKAATSAISITSSDSECDI. Phosphoserine is present on residues Ser-221, Ser-225, Ser-227, and Ser-228.

This sequence belongs to the SIX/Sine oculis homeobox family. As to quaternary structure, interacts with TLE4 and TLE5. As to expression, expressed in the developing and adult retina. Also expressed in the hypothalamic and the pituitary regions.

The protein resides in the nucleus. In terms of biological role, may be involved in eye development. The chain is Homeobox protein SIX6 (SIX6) from Homo sapiens (Human).